The primary structure comprises 342 residues: Aspartate carbamoyltransferase catalytic subunit (342 aa).

Carbamoyl phosphate-binding residues include Arg59 and Thr60. Residue Lys87 coordinates L-aspartate. 3 residues coordinate carbamoyl phosphate: Arg109, His142, and Gln145. 2 residues coordinate L-aspartate: Arg182 and Arg253. Residues Gly294 and Pro295 each contribute to the carbamoyl phosphate site.

This sequence belongs to the aspartate/ornithine carbamoyltransferase superfamily. ATCase family. In terms of assembly, heterododecamer (2C3:3R2) of six catalytic PyrB chains organized as two trimers (C3), and six regulatory PyrI chains organized as three dimers (R2).

The enzyme catalyses carbamoyl phosphate + L-aspartate = N-carbamoyl-L-aspartate + phosphate + H(+). The protein operates within pyrimidine metabolism; UMP biosynthesis via de novo pathway; (S)-dihydroorotate from bicarbonate: step 2/3. Functionally, catalyzes the condensation of carbamoyl phosphate and aspartate to form carbamoyl aspartate and inorganic phosphate, the committed step in the de novo pyrimidine nucleotide biosynthesis pathway. This is Aspartate carbamoyltransferase catalytic subunit from Synechococcus sp. (strain WH7803).